Here is a 235-residue protein sequence, read N- to C-terminus: Superoxide dismutase [Mn] 3.1, mitochondrial (235 aa).

The transit peptide at 1–31 (MALRTLASKKVLSFPFGGAGRPLAAAASARG) directs the protein to the mitochondrion. The Mn(2+) site is built by His-59, His-107, Asp-196, and His-200.

It belongs to the iron/manganese superoxide dismutase family. As to quaternary structure, homotetramer. Mn(2+) is required as a cofactor.

Its subcellular location is the mitochondrion matrix. The catalysed reaction is 2 superoxide + 2 H(+) = H2O2 + O2. Destroys superoxide anion radicals which are normally produced within the cells and which are toxic to biological systems. The polypeptide is Superoxide dismutase [Mn] 3.1, mitochondrial (SODA.4) (Zea mays (Maize)).